A 93-amino-acid chain; its full sequence is YcgL domain-containing protein AHA_2135 (93 aa).

The YcgL domain occupies 1-85; that stretch reads MLCAVYKSRK…PPENLLEQHK (85 aa).

This is YcgL domain-containing protein AHA_2135 from Aeromonas hydrophila subsp. hydrophila (strain ATCC 7966 / DSM 30187 / BCRC 13018 / CCUG 14551 / JCM 1027 / KCTC 2358 / NCIMB 9240 / NCTC 8049).